Here is a 304-residue protein sequence, read N- to C-terminus: Lipoyl synthase (304 aa).

Residues 1–21 (MAPELIQIDLEPRKPAPKPSW) form a disordered region. The [4Fe-4S] cluster site is built by Cys-48, Cys-53, Cys-59, Cys-74, Cys-78, Cys-81, and Ser-287. Residues 60 to 276 (WNHKTATFML…KEEAMKMGFR (217 aa)) form the Radical SAM core domain.

This sequence belongs to the radical SAM superfamily. Lipoyl synthase family. [4Fe-4S] cluster is required as a cofactor.

Its subcellular location is the cytoplasm. The catalysed reaction is [[Fe-S] cluster scaffold protein carrying a second [4Fe-4S](2+) cluster] + N(6)-octanoyl-L-lysyl-[protein] + 2 oxidized [2Fe-2S]-[ferredoxin] + 2 S-adenosyl-L-methionine + 4 H(+) = [[Fe-S] cluster scaffold protein] + N(6)-[(R)-dihydrolipoyl]-L-lysyl-[protein] + 4 Fe(3+) + 2 hydrogen sulfide + 2 5'-deoxyadenosine + 2 L-methionine + 2 reduced [2Fe-2S]-[ferredoxin]. Its pathway is protein modification; protein lipoylation via endogenous pathway; protein N(6)-(lipoyl)lysine from octanoyl-[acyl-carrier-protein]: step 2/2. In terms of biological role, catalyzes the radical-mediated insertion of two sulfur atoms into the C-6 and C-8 positions of the octanoyl moiety bound to the lipoyl domains of lipoate-dependent enzymes, thereby converting the octanoylated domains into lipoylated derivatives. The sequence is that of Lipoyl synthase from Koribacter versatilis (strain Ellin345).